The primary structure comprises 488 residues: G-patch domain and KOW motifs-containing protein (488 aa).

Positions 1 to 11 are enriched in pro residues; the sequence is MAGRESPPPSA. A disordered region spans residues 1 to 20; that stretch reads MAGRESPPPSAPSMAPISFG. Position 2 is an N-acetylalanine (Ala-2). Ser-25 carries the phosphoserine; by PKA modification. The tract at residues 72–97 is disordered; the sequence is IQNGSRRQPLSKNPKPSSETSTVLMS. Residues 73–95 show a composition bias toward polar residues; sequence QNGSRRQPLSKNPKPSSETSTVL. Ser-115 carries the post-translational modification Phosphoserine. One can recognise a G-patch domain in the interval 164-210; sequence VEAYGLAMLRGMGWKPGKGIGNTFSQVVKPRVNSIRPKGLGLGANRM. 2 disordered regions span residues 216–241 and 295–367; these read ASVG…PQGL and QEFD…PRNK. Positions 224 to 236 are enriched in basic and acidic residues; that stretch reads PRPDGDRENDKEG. The region spanning 231–258 is the KOW 1 domain; it reads ENDKEGQPQGLMHGRAVVVLSGPYRGLY. Positions 307 to 331 are enriched in polar residues; that stretch reads VSQTSTEQQNRATGTASSLKAAQNQ. Basic and acidic residues-rich tracts occupy residues 332–341 and 349–363; these read EDSKRRQKGS and PDRQ…EKAA. A KOW 2 domain is found at 401–428; sequence PDTCVCRTDEGRVLEDVREDMLETLIPK. The residue at position 485 (Ser-485) is a Phosphoserine.

This sequence belongs to the MOS2 family. As to quaternary structure, component of the minor spliceosome, which splices U12-type introns. Interacts with PRKX, PRKACB and DHX16. In terms of processing, phosphorylation regulates its ability to bind RNA.

It is found in the nucleus. RNA-binding protein involved in pre-mRNA splicing. As a component of the minor spliceosome, involved in the splicing of U12-type introns in pre-mRNAs. This chain is G-patch domain and KOW motifs-containing protein (Gpkow), found in Mus musculus (Mouse).